We begin with the raw amino-acid sequence, 278 residues long: Chitosanase (278 aa).

The N-terminal stretch at 1–41 is a signal peptide; it reads MRLKHPTARLALAALLVAVPRSVAAAGTVHAAPAPAGATRL. The active-site Proton donor is glutamate 63. Catalysis depends on aspartate 81, which acts as the Nucleophile.

Belongs to the glycosyl hydrolase 46 family.

The protein localises to the secreted. It catalyses the reaction Endohydrolysis of beta-(1-&gt;4)-linkages between D-glucosamine residues in a partly acetylated chitosan.. Functionally, aids in the defense against invading fungal pathogens by degrading their cell wall chitosan. This Nocardioides sp. (strain N106) protein is Chitosanase (csn).